Reading from the N-terminus, the 424-residue chain is Serine--tRNA ligase (424 aa).

The disordered stretch occupies residues 109–129; it reads QEDVPYGESEEDNREERKWGD. 231 to 233 serves as a coordination point for L-serine; sequence TAE. 262–264 provides a ligand contact to ATP; sequence RSE. Position 285 (E285) interacts with L-serine. 349–352 is an ATP binding site; the sequence is EISS. S385 lines the L-serine pocket.

This sequence belongs to the class-II aminoacyl-tRNA synthetase family. Type-1 seryl-tRNA synthetase subfamily. Homodimer. The tRNA molecule binds across the dimer.

It localises to the cytoplasm. The enzyme catalyses tRNA(Ser) + L-serine + ATP = L-seryl-tRNA(Ser) + AMP + diphosphate + H(+). It carries out the reaction tRNA(Sec) + L-serine + ATP = L-seryl-tRNA(Sec) + AMP + diphosphate + H(+). Its pathway is aminoacyl-tRNA biosynthesis; selenocysteinyl-tRNA(Sec) biosynthesis; L-seryl-tRNA(Sec) from L-serine and tRNA(Sec): step 1/1. Its function is as follows. Catalyzes the attachment of serine to tRNA(Ser). Is also able to aminoacylate tRNA(Sec) with serine, to form the misacylated tRNA L-seryl-tRNA(Sec), which will be further converted into selenocysteinyl-tRNA(Sec). The sequence is that of Serine--tRNA ligase from Shouchella clausii (strain KSM-K16) (Alkalihalobacillus clausii).